The following is a 402-amino-acid chain: MAVKTLKDLLAEGVEGRHVLVRSDLNVPLADGEITDPGRIDASIPTLRALLDEGARVIVAAHLGRPKGEVDPELSLAPVAEALAERLDQWVPLAGDVTGEDAHERANGLDDGDILLLENVRFDPRETSKDASERAEFAAELAELTADNGAFVSDGFGVVHREQASVYDVAKKLPSYAGGLVSAELEVLEKVSGAPEAPYAVVLGGSKVSDKLGVIEALAPKVDRLIIGGGMCFTFLAAQGHDVGGSLLQEDMIDTCKDLLERYGDVIVLPTDVVAAENFSKDAEHKAVGLSEIPSGWMGLDIGPESADAFAAVLGEAKTVFWNGPMGVFEFPAFAAGTKAVAEAIIKATDAGAFSVVGGGDSAAAVRTLGLDEKGFSHISTGGGASLEFLEGKTLPGVEVLG.

Substrate contacts are provided by residues 24 to 26, Arg-39, 62 to 65, Arg-121, and Arg-161; these read DLN and HLGR. ATP is bound by residues Lys-211, Gly-299, Glu-330, and 359–362; that span reads GGDS.

The protein belongs to the phosphoglycerate kinase family. Monomer.

It is found in the cytoplasm. It carries out the reaction (2R)-3-phosphoglycerate + ATP = (2R)-3-phospho-glyceroyl phosphate + ADP. Its pathway is carbohydrate degradation; glycolysis; pyruvate from D-glyceraldehyde 3-phosphate: step 2/5. The polypeptide is Phosphoglycerate kinase (Corynebacterium urealyticum (strain ATCC 43042 / DSM 7109)).